A 643-amino-acid polypeptide reads, in one-letter code: Aspartic protease 3 (643 aa).

An N-terminal signal peptide occupies residues 1–31; the sequence is MEGRTTAGRATPAGFWLFSCCLASVLWSANA. The span at 87–99 shows a compositional bias: low complexity; it reads APEVSGAAGASAS. The interval 87 to 116 is disordered; the sequence is APEVSGAAGASASKTSEKPIRPYHTGPSSR. In terms of domain architecture, Peptidase A1 spans 281 to 600; the sequence is YVGVIGIGTP…GTRPSLVGIA (320 aa). Residues aspartate 299 and aspartate 490 contribute to the active site.

This sequence belongs to the peptidase A1 family.

It localises to the endomembrane system. Inhibited by 49c, a hydroxyethylamine scaffold-based compound. Functionally, required for the processing-mediated maturation of a subset of microneme proteins, such as MIC6, and rhoptry proteins, such as ROP1. By regulating microneme and rhoptry processing, plays an essential role in the lysis of the host cell membrane during egress and in rhoptry content discharge, which is required for invasion of host cells. The chain is Aspartic protease 3 from Toxoplasma gondii.